The primary structure comprises 143 residues: Large ribosomal subunit protein uL13 (143 aa).

The protein belongs to the universal ribosomal protein uL13 family. In terms of assembly, part of the 50S ribosomal subunit.

In terms of biological role, this protein is one of the early assembly proteins of the 50S ribosomal subunit, although it is not seen to bind rRNA by itself. It is important during the early stages of 50S assembly. This Neisseria gonorrhoeae (strain ATCC 700825 / FA 1090) protein is Large ribosomal subunit protein uL13.